Consider the following 908-residue polypeptide: Glutamate receptor ionotropic, kainate 2 (908 aa).

The N-terminal stretch at 1 to 31 is a signal peptide; the sequence is MQRIAGITKMVTHRRWLGLLLLLLCVGYSHG. The Extracellular portion of the chain corresponds to 32 to 561; sequence MPHVLRFGGI…VFSFLNPLSP (530 aa). 7 N-linked (GlcNAc...) asparagine glycosylation sites follow: Asn-67, Asn-73, Asn-275, Asn-378, Asn-412, Asn-423, and Asn-430. An intrachain disulfide couples Cys-96 to Cys-347. L-glutamate-binding residues include Pro-516, Ala-518, and Arg-523. N-linked (GlcNAc...) asparagine glycosylation is present at Asn-546. The helical transmembrane segment at 562–582 threads the bilayer; the sequence is DIWMYILLAYLGVSCVLFVIA. Topologically, residues 583-638 are cytoplasmic; the sequence is RFSPYEWYNPHPCNPDSDVVENNFTLLNSFWFGVGALMQQGSELMPKALSTRIVGG. A helical transmembrane segment spans residues 639–659; it reads IWWFFTLIIISSYTANLAAFL. The Extracellular portion of the chain corresponds to 660 to 819; it reads TVERMESPID…KEASALGVQN (160 aa). 3 residues coordinate L-glutamate: Ser-689, Thr-690, and Glu-738. A disulfide bridge links Cys-750 with Cys-804. Asn-751 carries an N-linked (GlcNAc...) asparagine glycan. A helical transmembrane segment spans residues 820–840; the sequence is IGGIFIVLAAGLVLSVFVAVG. Topologically, residues 841-908 are cytoplasmic; sequence EFLYKSKQNA…RRLPGKETMA (68 aa).

It belongs to the glutamate-gated ion channel (TC 1.A.10.1) family. GRIK2 subfamily. Homotetramer and heterotetramer with GRIK5. Tetramers may be formed by the dimerization of dimers.

Its subcellular location is the cell membrane. The protein localises to the postsynaptic cell membrane. It catalyses the reaction Ca(2+)(in) = Ca(2+)(out). It carries out the reaction Na(+)(in) = Na(+)(out). Cold receptor activity activated by temperatures between 10-19 degrees Celsius. Its function is as follows. Ionotropic glutamate receptor that functions as a cation-permeable ligand-gated ion channel, gated by L-glutamate and the glutamatergic agonist kainic acid. L-glutamate acts as an excitatory neurotransmitter at many synapses in the central nervous system. Binding of the excitatory neurotransmitter L-glutamate induces a conformation change, leading to the opening of the cation channel, and thereby converts the chemical signal to an electrical impulse. The receptor then desensitizes rapidly and enters a transient inactive state, characterized by the presence of bound agonist. Independent of its ionotropic glutamate receptor activity, acts as a thermoreceptor conferring sensitivity to cold temperatures. Functions in dorsal root ganglion neurons. This Danio rerio (Zebrafish) protein is Glutamate receptor ionotropic, kainate 2.